The primary structure comprises 205 residues: Proteasome subunit beta (205 aa).

Residues 1–8 (MDDKQYKG) constitute a propeptide, removed in mature form; by autocatalysis. Catalysis depends on Thr-9, which acts as the Nucleophile.

It belongs to the peptidase T1B family. The 20S proteasome core is composed of 14 alpha and 14 beta subunits that assemble into four stacked heptameric rings, resulting in a barrel-shaped structure. The two inner rings, each composed of seven catalytic beta subunits, are sandwiched by two outer rings, each composed of seven alpha subunits. The catalytic chamber with the active sites is on the inside of the barrel. Has a gated structure, the ends of the cylinder being occluded by the N-termini of the alpha-subunits. Is capped at one or both ends by the proteasome regulatory ATPase, PAN.

It localises to the cytoplasm. The enzyme catalyses Cleavage of peptide bonds with very broad specificity.. The formation of the proteasomal ATPase PAN-20S proteasome complex, via the docking of the C-termini of PAN into the intersubunit pockets in the alpha-rings, triggers opening of the gate for substrate entry. Interconversion between the open-gate and close-gate conformations leads to a dynamic regulation of the 20S proteasome proteolysis activity. In terms of biological role, component of the proteasome core, a large protease complex with broad specificity involved in protein degradation. The chain is Proteasome subunit beta from Methanocella paludicola (strain DSM 17711 / JCM 13418 / NBRC 101707 / SANAE).